A 481-amino-acid polypeptide reads, in one-letter code: uncharacterized protein (481 aa).

The next 11 membrane-spanning stretches (helical) occupy residues 14–34 (LGFCSVVMLGINSIIGAGIFL), 46–66 (FAPMAYVLAGIFAGVVAIVFA), 90–110 (IGIYVGVTHAITASIAWGVLA), 134–154 (FSVKTLTFLGFIGVLLAINLF), 167–187 (TVGKAFALSAFIVGGLWIITT), 218–238 (FSSMALATIVALYAFTGFESI), 258–278 (IAIFSVGAIYLLTLTVAMLLG), 303–323 (IIVVGALISMFGINVAASFGA), 377–397 (LAVIARFVQFIIVPIALIALA), 411–431 (AFTDKVLPLVAIVVSVGLAVS), and 446–466 (YFSIALIVITFIVVPAMAYLH).

This sequence belongs to the amino acid-polyamine-organocation (APC) superfamily.

The protein localises to the cell membrane. Probable amino-acid or metabolite transport protein. This is an uncharacterized protein from Mycobacterium tuberculosis (strain CDC 1551 / Oshkosh).